A 444-amino-acid chain; its full sequence is Exodeoxyribonuclease 7 large subunit (444 aa).

This sequence belongs to the XseA family. In terms of assembly, heterooligomer composed of large and small subunits.

It localises to the cytoplasm. The catalysed reaction is Exonucleolytic cleavage in either 5'- to 3'- or 3'- to 5'-direction to yield nucleoside 5'-phosphates.. In terms of biological role, bidirectionally degrades single-stranded DNA into large acid-insoluble oligonucleotides, which are then degraded further into small acid-soluble oligonucleotides. The polypeptide is Exodeoxyribonuclease 7 large subunit (Rickettsia akari (strain Hartford)).